The chain runs to 929 residues: LPS-assembly protein LptD (929 aa).

Positions 1–33 (MAVKSLVFRRKFPLLVTGSLLALQPVAALTVQA) are cleaved as a signal peptide. The tract at residues 58–101 (NLPPRPAHTATSVSTAAAGSSVSGSGGETVEAEPTQRLVTESGG) is disordered. Positions 66–90 (TATSVSTAAAGSSVSGSGGETVEAE) are enriched in low complexity.

Belongs to the LptD family. Component of the lipopolysaccharide transport and assembly complex. Interacts with LptE and LptA.

The protein resides in the cell outer membrane. Its function is as follows. Together with LptE, is involved in the assembly of lipopolysaccharide (LPS) at the surface of the outer membrane. This Pseudomonas aeruginosa (strain LESB58) protein is LPS-assembly protein LptD.